The primary structure comprises 504 residues: Maturase K (504 aa).

It belongs to the intron maturase 2 family. MatK subfamily.

It is found in the plastid. The protein localises to the chloroplast. Usually encoded in the trnK tRNA gene intron. Probably assists in splicing its own and other chloroplast group II introns. The sequence is that of Maturase K from Taxus baccata (English yew).